We begin with the raw amino-acid sequence, 1782 residues long: Vitellogenin receptor (1782 aa).

Positions 1–18 (MRFIVLLFICSFIYPCYV) are cleaved as a signal peptide. Residues 19-1663 (SSIGFRRISK…SINFSRNTRN (1645 aa)) are Extracellular-facing. LDL-receptor class A domains follow at residues 35 to 72 (KCED…FECD), 81 to 118 (TCAK…DGCV), and 122 to 157 (NCTN…WNCK). 6 cysteine pairs are disulfide-bonded: C36–C48, C43–C61, C55–C71, C82–C94, C89–C107, and C101–C117. N122 is a glycosylation site (N-linked (GlcNAc...) asparagine). Disulfide bonds link C123–C134, C129–C147, and C141–C156. A glycan (N-linked (GlcNAc...) asparagine) is linked at N159. The 40-residue stretch at 166–205 (SCKTENYQYMCANHRCISLKVVCDKKDDCGDGSDEGPGCT) folds into the LDL-receptor class A 4 domain. 3 cysteine pairs are disulfide-bonded: C167-C181, C176-C194, and C188-C204. N208 and N239 each carry an N-linked (GlcNAc...) asparagine glycan. In terms of domain architecture, EGF-like 1 spans 208 to 243 (NCSSAGCQSNCHQTPKGSVCTCKPGYKLQKDNRTCN). Positions 244-283 (DIDECQAYGICDQDCMNVPGSYACTCQREYYLENDKRTCK) constitute an EGF-like; calcium-binding domain. 3 disulfide bridges follow: C248-C258, C254-C267, and C269-C282. LDL-receptor class B repeat units lie at residues 327–374 (DYVY…DWIT), 375–416 (KNIY…LPTQ), 417–460 (GKMY…DYPN), 461–501 (ERLY…TVFQ), and 502–544 (NKLY…DHSA). Residues 552–588 (PCYSNPCSQLCMLNQNKGYTCGCTLDKKLNADKHTCQ) form the EGF-like 2 domain. N-linked (GlcNAc...) asparagine glycosylation is found at N702, N859, N896, and N923. An EGF-like 3 domain is found at 889-927 (DCQKNNGNCSHVCLPSLITSFICACPPGMELSNDNRTCI). LDL-receptor class A domains are found at residues 931-969 (ECSK…SECR), 973-1009 (RCKE…QNCE), 1012-1049 (KCKS…EDCR), 1052-1090 (ECTS…EKCY), and 1094-1131 (ACKM…VHCL). 15 disulfides stabilise this stretch: C932–C945, C939–C958, C952–C968, C974–C986, C981–C999, C993–C1008, C1013–C1026, C1020–C1039, C1033–C1048, C1053–C1065, C1060–C1078, C1072–C1089, C1095–C1108, C1103–C1121, and C1115–C1130. N1133 and N1140 each carry an N-linked (GlcNAc...) asparagine glycan. LDL-receptor class A domains lie at 1140–1177 (NCSL…QNCT), 1178–1214 (YCFE…KNCD), and 1225–1260 (ECDE…GKCQ). 9 disulfide bridges follow: C1141-C1154, C1148-C1167, C1161-C1176, C1179-C1191, C1186-C1204, C1198-C1213, C1226-C1236, C1231-C1249, and C1243-C1259. N1175 carries N-linked (GlcNAc...) asparagine glycosylation. One can recognise an EGF-like 4 domain in the interval 1262-1298 (ACTVNNFCKGMCYKTPAGAVCGCQSGYRLAVDMISCE). LDL-receptor class B repeat units lie at residues 1385 to 1425 (DSVY…DWIT), 1471 to 1518 (RWLF…DHVK), and 1519 to 1561 (SKLY…FEQS). Residues N1626, N1640, and N1656 are each glycosylated (N-linked (GlcNAc...) asparagine). The helical transmembrane segment at 1664-1684 (ISGIYSITIIVLLVSVLLLCV) threads the bilayer. Residues 1685–1782 (YYYYQKNKLK…ALIYFVHNSK (98 aa)) lie on the Cytoplasmic side of the membrane.

As to expression, expressed in ovaries of reproductive females.

It is found in the membrane. Its function is as follows. Involved in uptake of vitellogenin by endocytosis. Expression is regulated by the juvenile hormone analog, methoprene (in vitro). The chain is Vitellogenin receptor from Solenopsis invicta (Red imported fire ant).